Reading from the N-terminus, the 401-residue chain is tRNA(Met) cytidine acetate ligase (401 aa).

Residues 7 to 20, Gly-101, Asn-160, and 185 to 186 contribute to the ATP site; these read VVEYNPFHNGHLYH and RI.

It belongs to the TmcAL family.

The protein resides in the cytoplasm. It carries out the reaction cytidine(34) in elongator tRNA(Met) + acetate + ATP = N(4)-acetylcytidine(34) in elongator tRNA(Met) + AMP + diphosphate. Its function is as follows. Catalyzes the formation of N(4)-acetylcytidine (ac(4)C) at the wobble position of elongator tRNA(Met), using acetate and ATP as substrates. First activates an acetate ion to form acetyladenylate (Ac-AMP) and then transfers the acetyl group to tRNA to form ac(4)C34. This Anoxybacillus flavithermus (strain DSM 21510 / WK1) protein is tRNA(Met) cytidine acetate ligase.